We begin with the raw amino-acid sequence, 485 residues long: Aerolysin-5 (485 aa).

A signal peptide spans 1–23; that stretch reads MQKLKITGLSLIISGLLMAQRHA. Disulfide bonds link C42–C98 and C182–C187. Residues 68-84 are interaction with host N-linked glycan; it reads WQISGLANGWVIMGPVY. Residues 256 to 288 form a part of the transmembrane beta-barrel after proteolytic activation of the toxin and insertion into the host membrane region; the sequence is YGLSEKVTTKNKFKWPLVGETELSIEIAANQSW. Positions 346-355 are interaction with glycans from host GPI-anchor; it reads RWGGNAWYTH. The propeptide occupies 446–485; it reads AADGKAPRALSARRGEQGLRLAIPLECRKSSPGLASATSA.

This sequence belongs to the aerolysin family. Homodimer in solution; homoheptamer in the host membrane. After binding to GPI-anchored proteins in target membranes and proteolytic removal of the C-terminal propeptide, the protein assembles into a heptameric pre-pore complex. A further conformation change leads to insertion into the host membrane. Proteolytic cleavage and subsequent release of the propeptide trigger a major conformation change, leading to the formation of a heptameric pre-pore that then inserts into the host membrane.

The protein resides in the secreted. Its subcellular location is the host cell membrane. In terms of biological role, secreted, cytolytic toxin that forms pores in host membranes after proteolytic removal of a C-terminal propeptide, leading to destruction of the membrane permeability barrier and cell death. The pores are formed by transmembrane beta-strands and are approximately 3 nm in diameter. This is Aerolysin-5 (ahh5) from Aeromonas hydrophila.